Here is a 117-residue protein sequence, read N- to C-terminus: Transcription elongation factor SPT4 (117 aa).

N-acetylalanine is present on Ala-2. The tract at residues 2–40 is interaction with SUPT5H; it reads ALETVPKDLRHLRACLLCSLVKTIDQFEYDGCDNCDAYL. Zn(2+)-binding residues include Cys-16, Cys-19, Cys-33, and Cys-36. A C4-type zinc finger spans residues 16–36; the sequence is CLLCSLVKTIDQFEYDGCDNC.

This sequence belongs to the SPT4 family. As to quaternary structure, interacts with SUPT5H to form DSIF. DSIF interacts with the positive transcription elongation factor b complex (P-TEFb complex), which is composed of CDK9 and cyclin-T (CCNT1 or CCNT2). DSIF interacts with RNA polymerase II, and this interaction is reduced by phosphorylation of the C-terminal domain (CTD) of POLR2A by P-TEFb. DSIF also interacts with the NELF complex, which is composed of NELFA, NELFB, NELFD and NELFE, and this interaction occurs following prior binding of DSIF to RNA polymerase II. DSIF also interacts with PRMT1/HRMT1L2, TATSF1, RNGTT/CAP1A, PRMT5/SKB1, SUPT6H, and can interact with PIN1. In terms of processing, ubiquitinated by UBR5 when not assembled in the DSIF complex, leading to its degradation: UBR5 recognizes and binds a degron that is not accessible when SUPT4H1 is part of the DSIF complex.

It localises to the nucleus. Functionally, component of the DRB sensitivity-inducing factor complex (DSIF complex), which regulates mRNA processing and transcription elongation by RNA polymerase II. DSIF positively regulates mRNA capping by stimulating the mRNA guanylyltransferase activity of RNGTT/CAP1A. DSIF also acts cooperatively with the negative elongation factor complex (NELF complex) to enhance transcriptional pausing at sites proximal to the promoter. Transcriptional pausing may facilitate the assembly of an elongation competent RNA polymerase II complex. DSIF and NELF promote pausing by inhibition of the transcription elongation factor TFIIS/S-II. TFIIS/S-II binds to RNA polymerase II at transcription pause sites and stimulates the weak intrinsic nuclease activity of the enzyme. Cleavage of blocked transcripts by RNA polymerase II promotes the resumption of transcription from the new 3' terminus and may allow repeated attempts at transcription through natural pause sites. In Pongo abelii (Sumatran orangutan), this protein is Transcription elongation factor SPT4 (SUPT4H1).